A 415-amino-acid chain; its full sequence is Adenylosuccinate synthetase (415 aa).

GTP-binding positions include 12 to 18 (GDEGKGK) and 40 to 42 (GHT). The Proton acceptor role is filled by aspartate 13. Positions 13 and 40 each coordinate Mg(2+). IMP-binding positions include 13–16 (DEGK), 38–41 (NAGH), threonine 125, arginine 139, glutamine 219, threonine 234, and arginine 298. The Proton donor role is filled by histidine 41. A substrate-binding site is contributed by 294 to 300 (TTTGRPR). GTP contacts are provided by residues arginine 300, 326–328 (KLD), and 404–406 (STG).

Belongs to the adenylosuccinate synthetase family. Homodimer. Requires Mg(2+) as cofactor.

It localises to the cytoplasm. It catalyses the reaction IMP + L-aspartate + GTP = N(6)-(1,2-dicarboxyethyl)-AMP + GDP + phosphate + 2 H(+). The protein operates within purine metabolism; AMP biosynthesis via de novo pathway; AMP from IMP: step 1/2. Its function is as follows. Plays an important role in the de novo pathway of purine nucleotide biosynthesis. Catalyzes the first committed step in the biosynthesis of AMP from IMP. The protein is Adenylosuccinate synthetase of Wolinella succinogenes (strain ATCC 29543 / DSM 1740 / CCUG 13145 / JCM 31913 / LMG 7466 / NCTC 11488 / FDC 602W) (Vibrio succinogenes).